Consider the following 308-residue polypeptide: HTH-type transcriptional activator AllS (308 aa).

The region spanning 2–59 is the HTH lysR-type domain; the sequence is FDPETLRTFISVAETGSFSKAAERLCKTTATISYRIKLLEENTGVGLFFRTTRSVSLT. Positions 19-38 form a DNA-binding region, H-T-H motif; it reads FSKAAERLCKTTATISYRIK.

The protein belongs to the LysR transcriptional regulatory family.

Positive regulator essential for the expression of allD operon. Binds to the allD promoter. In Salmonella paratyphi A (strain ATCC 9150 / SARB42), this protein is HTH-type transcriptional activator AllS (allS).